A 529-amino-acid chain; its full sequence is MLLAALCCLLWSFRTSAGHFPRACASSKSLMEKECCPAWTGDSSPCGQLSGRGACQDITLSKAPLGPQYPFTGMDDREAWPSVFYNRTCQCFGNFMGFNCGNCKFGFWGPNCTEKRLLVRRNIFDLSVPEKNKFLAYLTLAKHTISPDYVIPIGTYGQMNNGSTPMFNDINVYDLFVWMHYYVSRDTLLGGSEIWKDIDFAHEAPGFLPWHRLFLLLWEQEIQKLTGDENFTIPYWDWRDAKSCDICTDEYMGGHNPANPNLLSPASFFSSWQIICTRLEEYNSRQALCDGTPRGPLLRNPGHDKARTPRLPSSADVEFCLSLTQYESDSMDKAANFSFRNTLEGFASPLTGIADASQSSMHNALHIYMNGTMSQVQGSANDPIFLLHHAFVDSIFEQWLRRHHPLQEVYPEANAPIGHNRESYMVPFIPLYRNGDFFISSRDLGYDYSNLQDSERDIFQDYIKPFLEQASRIWPWLIGAAVVGSVLTAVLGRLTSLLCRRKRKQLREERQPLLMEKEDYHSLLYQTHV.

A signal peptide spans 1 to 18; that stretch reads MLLAALCCLLWSFRTSAG. Topologically, residues 19–472 are lumenal; the sequence is HFPRACASSK…IKPFLEQASR (454 aa). 3 N-linked (GlcNAc...) asparagine glycosylation sites follow: Asn86, Asn111, and Asn161. Cu cation is bound by residues His180, His202, and His211. N-linked (GlcNAc...) asparagine glycosylation is found at Asn230 and Asn336. His362 and His366 together coordinate Cu cation. N-linked (GlcNAc...) asparagine glycosylation occurs at Asn370. Cu cation is bound at residue His389. Residues 473-495 traverse the membrane as a helical segment; it reads IWPWLIGAAVVGSVLTAVLGRLT. The Cytoplasmic portion of the chain corresponds to 496–529; sequence SLLCRRKRKQLREERQPLLMEKEDYHSLLYQTHV.

Belongs to the tyrosinase family. As to quaternary structure, forms an OPN3-dependent complex with DCT in response to blue light in melanocytes. Cu(2+) serves as cofactor. Glycosylated.

It is found in the melanosome membrane. Its subcellular location is the melanosome. The enzyme catalyses 2 L-dopa + O2 = 2 L-dopaquinone + 2 H2O. It catalyses the reaction L-tyrosine + O2 = L-dopaquinone + H2O. The catalysed reaction is 2 5,6-dihydroxyindole-2-carboxylate + O2 = 2 indole-5,6-quinone-2-carboxylate + 2 H2O. In terms of biological role, this is a copper-containing oxidase that functions in the formation of pigments such as melanins and other polyphenolic compounds. Catalyzes the initial and rate limiting step in the cascade of reactions leading to melanin production from tyrosine. In addition to hydroxylating tyrosine to DOPA (3,4-dihydroxyphenylalanine), also catalyzes the oxidation of DOPA to DOPA-quinone, and possibly the oxidation of DHI (5,6-dihydroxyindole) to indole-5,6 quinone. The protein is Tyrosinase (TYR) of Felis catus (Cat).